We begin with the raw amino-acid sequence, 488 residues long: Type II restriction enzyme HgaI (488 aa).

The enzyme catalyses Endonucleolytic cleavage of DNA to give specific double-stranded fragments with terminal 5'-phosphates.. An S subtype restriction enzyme that recognizes the double-stranded sequences 5'-GACGC-3' and 5'-GCGTC-3' and cleaves respectively 10 bases after G-1 and 10 bases before G'-1. This Avibacterium volantium (Pasteurella volantium) protein is Type II restriction enzyme HgaI (hgaIR).